The following is a 233-amino-acid chain: ATP synthase subunit a (233 aa).

The next 6 helical transmembrane spans lie at 27–47 (ANFVTMQLLVVAIIVVLFAIL), 85–105 (YLAFFGTIFIFILFANLIGVV), 114–134 (VPSVPAGCAIAAFFYYNIVGV), 143–163 (LAHFAGPMPLLAPLMIPIELV), 189–209 (VFLKLTFLFVPAVFMGLHVFV), and 210–230 (SFLQAYIFMLLTMMYVAGAVA).

Belongs to the ATPase A chain family. As to quaternary structure, F-type ATPases have 2 components, CF(1) - the catalytic core - and CF(0) - the membrane proton channel. CF(1) has five subunits: alpha(3), beta(3), gamma(1), delta(1), epsilon(1). CF(0) has three main subunits: a(1), b(2) and c(9-12). The alpha and beta chains form an alternating ring which encloses part of the gamma chain. CF(1) is attached to CF(0) by a central stalk formed by the gamma and epsilon chains, while a peripheral stalk is formed by the delta and b chains.

Its subcellular location is the cell inner membrane. Key component of the proton channel; it plays a direct role in the translocation of protons across the membrane. This chain is ATP synthase subunit a, found in Solibacter usitatus (strain Ellin6076).